The chain runs to 314 residues: 4-hydroxy-3-methylbut-2-enyl diphosphate reductase (314 aa).

Residue C12 coordinates [4Fe-4S] cluster. (2E)-4-hydroxy-3-methylbut-2-enyl diphosphate contacts are provided by H41 and H74. Dimethylallyl diphosphate is bound by residues H41 and H74. The isopentenyl diphosphate site is built by H41 and H74. C96 is a binding site for [4Fe-4S] cluster. H124 lines the (2E)-4-hydroxy-3-methylbut-2-enyl diphosphate pocket. H124 contributes to the dimethylallyl diphosphate binding site. H124 is a binding site for isopentenyl diphosphate. The active-site Proton donor is E126. A (2E)-4-hydroxy-3-methylbut-2-enyl diphosphate-binding site is contributed by T168. Residue C198 coordinates [4Fe-4S] cluster. Residues S226, S227, N228, and S270 each coordinate (2E)-4-hydroxy-3-methylbut-2-enyl diphosphate. 4 residues coordinate dimethylallyl diphosphate: S226, S227, N228, and S270. 4 residues coordinate isopentenyl diphosphate: S226, S227, N228, and S270.

Belongs to the IspH family. It depends on [4Fe-4S] cluster as a cofactor.

It carries out the reaction isopentenyl diphosphate + 2 oxidized [2Fe-2S]-[ferredoxin] + H2O = (2E)-4-hydroxy-3-methylbut-2-enyl diphosphate + 2 reduced [2Fe-2S]-[ferredoxin] + 2 H(+). The enzyme catalyses dimethylallyl diphosphate + 2 oxidized [2Fe-2S]-[ferredoxin] + H2O = (2E)-4-hydroxy-3-methylbut-2-enyl diphosphate + 2 reduced [2Fe-2S]-[ferredoxin] + 2 H(+). It functions in the pathway isoprenoid biosynthesis; dimethylallyl diphosphate biosynthesis; dimethylallyl diphosphate from (2E)-4-hydroxy-3-methylbutenyl diphosphate: step 1/1. It participates in isoprenoid biosynthesis; isopentenyl diphosphate biosynthesis via DXP pathway; isopentenyl diphosphate from 1-deoxy-D-xylulose 5-phosphate: step 6/6. In terms of biological role, catalyzes the conversion of 1-hydroxy-2-methyl-2-(E)-butenyl 4-diphosphate (HMBPP) into a mixture of isopentenyl diphosphate (IPP) and dimethylallyl diphosphate (DMAPP). Acts in the terminal step of the DOXP/MEP pathway for isoprenoid precursor biosynthesis. The chain is 4-hydroxy-3-methylbut-2-enyl diphosphate reductase from Pseudomonas fluorescens (strain Pf0-1).